Reading from the N-terminus, the 41-residue chain is Large ribosomal subunit protein bL36 (41 aa).

Belongs to the bacterial ribosomal protein bL36 family.

This chain is Large ribosomal subunit protein bL36, found in Parvibaculum lavamentivorans (strain DS-1 / DSM 13023 / NCIMB 13966).